A 690-amino-acid polypeptide reads, in one-letter code: Choline transporter-like 1 (690 aa).

The chain crosses the membrane as a helical span at residues 23 to 43 (IFWLVLYVVFWIALIVIAVFS). A glycan (N-linked (GlcNAc...) asparagine) is linked at asparagine 134. Transmembrane regions (helical) follow at residues 203 to 223 (LYKAWPTIVLICALSLVFSIV), 237 to 259 (WLICIIVVVASVGITGVLWWSYY), 282 to 302 (ATIYVLAIAATCIMIILLVVI), and 334 to 354 (LLAFLALSVFLAFWVVVVVCL). The N-linked (GlcNAc...) asparagine glycan is linked to asparagine 391. A run of 4 helical transmembrane segments spans residues 415-435 (IYIIGLIWTSEFIFACQQLAI), 464-484 (LGSVAKGSLIITIFKIPRLIL), 565-585 (FVLFLGKLAVASICGLISILL), and 594-614 (FYMAPVIIITVFAFFIAHIIL).

It belongs to the CTL (choline transporter-like) family.

Its subcellular location is the membrane. The protein is Choline transporter-like 1 of Anopheles gambiae (African malaria mosquito).